The chain runs to 107 residues: Nucleoid-associated protein R00231 (107 aa).

The protein belongs to the YbaB/EbfC family. Homodimer.

The protein resides in the cytoplasm. Its subcellular location is the nucleoid. In terms of biological role, binds to DNA and alters its conformation. May be involved in regulation of gene expression, nucleoid organization and DNA protection. This chain is Nucleoid-associated protein R00231, found in Rhizobium meliloti (strain 1021) (Ensifer meliloti).